The chain runs to 152 residues: Cuticle protein 64 (152 aa).

7 repeat units span residues 27–30 (AAPA), 33–37 (AAPAV), 39–42 (AAPA), 86–89 (AAPV), 92–95 (AAPA), 98–101 (AAPA), and 127–130 (AAPA).

Functionally, component of the cuticle of migratory locust which contains more than 100 different structural proteins. The chain is Cuticle protein 64 from Locusta migratoria (Migratory locust).